The chain runs to 182 residues: Ribosome maturation factor RimM (182 aa).

The 80-residue stretch at 103 to 182 (EGDYYWKDLM…SIEVDWDPGF (80 aa)) folds into the PRC barrel domain.

Belongs to the RimM family. In terms of assembly, binds ribosomal protein uS19.

It is found in the cytoplasm. In terms of biological role, an accessory protein needed during the final step in the assembly of 30S ribosomal subunit, possibly for assembly of the head region. Essential for efficient processing of 16S rRNA. May be needed both before and after RbfA during the maturation of 16S rRNA. It has affinity for free ribosomal 30S subunits but not for 70S ribosomes. This is Ribosome maturation factor RimM from Escherichia coli O139:H28 (strain E24377A / ETEC).